Here is a 320-residue protein sequence, read N- to C-terminus: Cytochrome f (320 aa).

Positions 1–35 (MQTKNTFSWIKKEIIRSISVSLMIYIIARTSISNA) are cleaved as a signal peptide. Residues Y36, C56, C59, and H60 each contribute to the heme site. The chain crosses the membrane as a helical span at residues 286–306 (VQGLLFFLASVILAQIFLVLK).

Belongs to the cytochrome f family. The 4 large subunits of the cytochrome b6-f complex are cytochrome b6, subunit IV (17 kDa polypeptide, petD), cytochrome f and the Rieske protein, while the 4 small subunits are PetG, PetL, PetM and PetN. The complex functions as a dimer. It depends on heme as a cofactor.

Its subcellular location is the plastid. It localises to the chloroplast thylakoid membrane. Component of the cytochrome b6-f complex, which mediates electron transfer between photosystem II (PSII) and photosystem I (PSI), cyclic electron flow around PSI, and state transitions. In Eucalyptus globulus subsp. globulus (Tasmanian blue gum), this protein is Cytochrome f.